Here is a 313-residue protein sequence, read N- to C-terminus: 4-diphosphocytidyl-2-C-methyl-D-erythritol kinase (313 aa).

The active site involves K11. 99–109 (PVAAGLAGGST) serves as a coordination point for ATP. The active site involves D141.

It belongs to the GHMP kinase family. IspE subfamily.

It catalyses the reaction 4-CDP-2-C-methyl-D-erythritol + ATP = 4-CDP-2-C-methyl-D-erythritol 2-phosphate + ADP + H(+). It functions in the pathway isoprenoid biosynthesis; isopentenyl diphosphate biosynthesis via DXP pathway; isopentenyl diphosphate from 1-deoxy-D-xylulose 5-phosphate: step 3/6. Its function is as follows. Catalyzes the phosphorylation of the position 2 hydroxy group of 4-diphosphocytidyl-2C-methyl-D-erythritol. The polypeptide is 4-diphosphocytidyl-2-C-methyl-D-erythritol kinase (Microcystis aeruginosa (strain NIES-843 / IAM M-2473)).